Consider the following 70-residue polypeptide: MILYPSIVDLMEKVDSKYTLCALVAKRARQLVAGDKKLVDIDSDKPVTIATEEVYRGLITYERPQKYGIK.

It belongs to the RNA polymerase subunit omega family. As to quaternary structure, the RNAP catalytic core consists of 2 alpha, 1 beta, 1 beta' and 1 omega subunit. When a sigma factor is associated with the core the holoenzyme is formed, which can initiate transcription.

It catalyses the reaction RNA(n) + a ribonucleoside 5'-triphosphate = RNA(n+1) + diphosphate. In terms of biological role, promotes RNA polymerase assembly. Latches the N- and C-terminal regions of the beta' subunit thereby facilitating its interaction with the beta and alpha subunits. This chain is DNA-directed RNA polymerase subunit omega, found in Caldanaerobacter subterraneus subsp. tengcongensis (strain DSM 15242 / JCM 11007 / NBRC 100824 / MB4) (Thermoanaerobacter tengcongensis).